Reading from the N-terminus, the 354-residue chain is Homer protein homolog 2 (354 aa).

One can recognise a WH1 domain in the interval 1-110 (MGEQPIFTTR…EKFQEVREAA (110 aa)). Positions 92-120 (SEQQLTKFAEKFQEVREAARLARDKSQEK) form a coiled coil. The segment at 114 to 163 (RDKSQEKIETSSNHSQESGCETPSSTQASSVNGTDDEKASHASPADTHLK) is disordered. The span at 123–146 (TSSNHSQESGCETPSSTQASSVNG) shows a compositional bias: polar residues. A coiled-coil region spans residues 160–329 (THLKSENDKL…RHLKGELKSF (170 aa)).

Belongs to the Homer family. In terms of assembly, isoform 1 and isoform 2 encode coiled-coil structures that mediate homo- and heteromultimerization. Interacts with NFATC2; interaction is reduced by AKT activation. Interacts with NFATC1 and NFATC4. Interacts with DAGLA (via PPXXF motif); this interaction is required for the cell membrane localization of DAGLA. Constitutively expressed in the adult hippocampus.

The protein resides in the cytoplasm. It is found in the cell membrane. The protein localises to the postsynaptic density. It localises to the synapse. Its subcellular location is the cell projection. The protein resides in the stereocilium. In terms of biological role, postsynaptic density scaffolding protein. Binds and cross-links cytoplasmic regions of GRM1, GRM5, ITPR1, DNM3, RYR1, RYR2, SHANK1 and SHANK3. By physically linking GRM1 and GRM5 with ER-associated ITPR1 receptors, it aids the coupling of surface receptors to intracellular calcium release. May also couple GRM1 to PI3 kinase through its interaction with AGAP2. Isoforms can be differently regulated and may play an important role in maintaining the plasticity at glutamatergic synapses. Required for normal hearing. Negatively regulates T cell activation by inhibiting the calcineurin-NFAT pathway. Acts by competing with calcineurin/PPP3CA for NFAT protein binding, hence preventing NFAT activation by PPP3CA. The protein is Homer protein homolog 2 of Rattus norvegicus (Rat).